Reading from the N-terminus, the 70-residue chain is U2-agatoxin-Ao1n (70 aa).

The N-terminal stretch at 1 to 20 (MRAIISLLLISAMVFYIIAA) is a signal peptide. Positions 21 to 34 (VPEEEGLQLSEDER) are excised as a propeptide. 3 disulfide bridges follow: Cys-37-Cys-53, Cys-44-Cys-58, and Cys-52-Cys-68. Residue Leu-69 is modified to Leucine amide.

It belongs to the neurotoxin 01 (U2-agtx) family. As to expression, expressed by the venom gland.

The protein resides in the secreted. Functionally, insect active toxin causing rapid but reversible paralysis in crickets. No activity shown in mammals. Does not show effect on mammalian voltage-gated calcium channels. This is U2-agatoxin-Ao1n from Agelena orientalis (Funnel-web spider).